The sequence spans 147 residues: Calmodulin (147 aa).

EF-hand domains follow at residues 8 to 43 (EQIAEFKEAFALFDKDNSGSISASELATVMRSLGLS), 44 to 79 (PSEAEVADLMNEIDVDGNHAIEFSEFLALMSRQLKC), 81 to 116 (DSEQELLEAFKVFDKNGDGLISAAELKHVLTSIGEK), and 120 to 147 (AEVDEMLREVSDGSGEINIKQFAALLSK). Ca(2+) is bound by residues D21, D23, S25, S27, E32, D57, D59, N61, E68, D94, N96, D98, and E105.

It belongs to the calmodulin family.

In terms of biological role, calmodulin mediates the control of a large number of enzymes, ion channels and other proteins by Ca(2+). Among the enzymes to be stimulated by the calmodulin-Ca(2+) complex are a number of protein kinases and phosphatases. The protein is Calmodulin (CMD1) of Kluyveromyces lactis (strain ATCC 8585 / CBS 2359 / DSM 70799 / NBRC 1267 / NRRL Y-1140 / WM37) (Yeast).